The primary structure comprises 454 residues: Bifunctional protein GlmU (454 aa).

The pyrophosphorylase stretch occupies residues 1-226 (MSLNVVILAA…AIEVEGANNR (226 aa)). UDP-N-acetyl-alpha-D-glucosamine contacts are provided by residues 8 to 11 (LAAG), Lys22, Gln73, 78 to 79 (GT), 100 to 102 (YGD), Gly137, Glu151, Asn166, and Asn224. Asp102 contributes to the Mg(2+) binding site. Asn224 contacts Mg(2+). The tract at residues 227 to 247 (VQLAQLERAYQARAAEKMMLE) is linker. The tract at residues 248–454 (GANLRDPARI…GWQRPIKIKK (207 aa)) is N-acetyltransferase. Arg330 and Lys348 together coordinate UDP-N-acetyl-alpha-D-glucosamine. His360 (proton acceptor) is an active-site residue. UDP-N-acetyl-alpha-D-glucosamine is bound by residues Tyr363 and Asn374. Acetyl-CoA is bound by residues Ala377, 383-384 (NY), Ser402, Ala420, and Arg437.

The protein in the N-terminal section; belongs to the N-acetylglucosamine-1-phosphate uridyltransferase family. It in the C-terminal section; belongs to the transferase hexapeptide repeat family. As to quaternary structure, homotrimer. Mg(2+) serves as cofactor.

It localises to the cytoplasm. It catalyses the reaction alpha-D-glucosamine 1-phosphate + acetyl-CoA = N-acetyl-alpha-D-glucosamine 1-phosphate + CoA + H(+). It carries out the reaction N-acetyl-alpha-D-glucosamine 1-phosphate + UTP + H(+) = UDP-N-acetyl-alpha-D-glucosamine + diphosphate. It functions in the pathway nucleotide-sugar biosynthesis; UDP-N-acetyl-alpha-D-glucosamine biosynthesis; N-acetyl-alpha-D-glucosamine 1-phosphate from alpha-D-glucosamine 6-phosphate (route II): step 2/2. Its pathway is nucleotide-sugar biosynthesis; UDP-N-acetyl-alpha-D-glucosamine biosynthesis; UDP-N-acetyl-alpha-D-glucosamine from N-acetyl-alpha-D-glucosamine 1-phosphate: step 1/1. The protein operates within bacterial outer membrane biogenesis; LPS lipid A biosynthesis. In terms of biological role, catalyzes the last two sequential reactions in the de novo biosynthetic pathway for UDP-N-acetylglucosamine (UDP-GlcNAc). The C-terminal domain catalyzes the transfer of acetyl group from acetyl coenzyme A to glucosamine-1-phosphate (GlcN-1-P) to produce N-acetylglucosamine-1-phosphate (GlcNAc-1-P), which is converted into UDP-GlcNAc by the transfer of uridine 5-monophosphate (from uridine 5-triphosphate), a reaction catalyzed by the N-terminal domain. This is Bifunctional protein GlmU from Shewanella frigidimarina (strain NCIMB 400).